We begin with the raw amino-acid sequence, 560 residues long: MNNNIINLIAAIILSLSIIFGWQYFVVKPEQKKQQQQIAVQKAENLKKQQLKALVEPATGIVVQEESQVQRIKIESESLTGSISLKGLRFDDLILKKYKQDLSKNSPEVRLFSPANTENAYFAEVGLVSNLSSVKLPNNDTIWNSDSEILSPEKPVHLFWVNEDGVKFLVTITVDENYLFTIEQTIVNNSDKELPVQSYGLINRKYIAVEKAVNILHQGPIGCIDENLKEYSYDDIKDKKSEKFAASKVDWIGITDKYWLSSLIPDKSSNYSSNFNYALKQGIERYQVDFISPVQIIKPGKNFSIKSRIFAGAKKVDLLDKYEKQYDIKLFDRAIDFGWFYIITKPVFYAMNFFYGYVGNFGVSILIVTVIIKLLMFTLANKSYRSMKKMKNLQPEIDRIKNLYSDDKARLNQEIMALYKKEKVNPVAGCLPILVQIPVFFSIYKVLYVTIEMRQAPFYGWIKDLSAPDPTTIFNLFGLLPFAPPSFLMIGAWPILMAITMFLQQKMSPEPADPMQAQVMKFMPLIFLFMFSSFPVGLLIYWSWNNILSIIQQYYINKFN.

6 consecutive transmembrane segments (helical) span residues 5 to 25 (IINLIAAIILSLSIIFGWQYF), 334 to 354 (AIDFGWFYIITKPVFYAMNFF), 357 to 377 (YVGNFGVSILIVTVIIKLLMF), 431 to 451 (LPILVQIPVFFSIYKVLYVTI), 476 to 496 (LFGLLPFAPPSFLMIGAWPIL), and 522 to 542 (FMPLIFLFMFSSFPVGLLIYW).

This sequence belongs to the OXA1/ALB3/YidC family. Type 1 subfamily. In terms of assembly, interacts with the Sec translocase complex via SecD. Specifically interacts with transmembrane segments of nascent integral membrane proteins during membrane integration.

The protein resides in the cell inner membrane. Required for the insertion and/or proper folding and/or complex formation of integral membrane proteins into the membrane. Involved in integration of membrane proteins that insert both dependently and independently of the Sec translocase complex, as well as at least some lipoproteins. Aids folding of multispanning membrane proteins. The sequence is that of Membrane protein insertase YidC from Rickettsia rickettsii (strain Sheila Smith).